The following is a 184-amino-acid chain: Ribosome-recycling factor (184 aa).

This sequence belongs to the RRF family.

Its subcellular location is the cytoplasm. In terms of biological role, responsible for the release of ribosomes from messenger RNA at the termination of protein biosynthesis. May increase the efficiency of translation by recycling ribosomes from one round of translation to another. The sequence is that of Ribosome-recycling factor from Caldicellulosiruptor bescii (strain ATCC BAA-1888 / DSM 6725 / KCTC 15123 / Z-1320) (Anaerocellum thermophilum).